Consider the following 68-residue polypeptide: uncharacterized protein (68 aa).

This is an uncharacterized protein from Feline immunodeficiency virus (strain San Diego) (FIV).